Consider the following 413-residue polypeptide: MDPEAKVSSSRRRDLPPIPQGQRRTPRALPSMPSQDTAEEMPAPKSRKKKAKRDAESVDEPDDGGMEMGGLASRRQSECPEPLTPEPLDNPPQRRKKKKKAQAIDAEGDQTDLVSNGDTLDQNTDEEVTRKPKKRKVKPKVTETQSNNELDVEDDDVITDPQSPIPQHSLFSAPQGPSQPVGKVFVEKSRRFQAADRVEQWKPSGPIEQSIMDIRSMWTTRDVSMRVHSGFRVIGLFSHGFLAGYAVWNIIVVYVLAGDQMSSLSNLLQQFHTLAYPAQSLLYLLLALSTVSAFDRVNLAKAPAAMRSLLRLSPVALASVFYFSALVLSLSQQMTSDRINLYKYSSYNTTLWPPGSESSILYPWITVNLVVSLLVGLAWILMSTSPDIDNTEAFLMSMEMEYPNSEEKGNVTA.

The tract at residues 1–162 (MDPEAKVSSS…EDDDVITDPQ (162 aa)) is disordered. Polar residues predominate over residues 112–122 (DLVSNGDTLDQ). The next 4 helical transmembrane spans lie at 233 to 253 (VIGLFSHGFLAGYAVWNIIVV), 274 to 294 (LAYPAQSLLYLLLALSTVSAF), 312 to 332 (LSPVALASVFYFSALVLSLSQ), and 360 to 380 (ILYPWITVNLVVSLLVGLAWI).

This sequence belongs to the TMEM237 family.

It localises to the membrane. It is found in the cell projection. Its subcellular location is the cilium. Component of the transition zone in primary cilia. Required for ciliogenesis. The chain is Transmembrane protein 237B (tmem237b) from Danio rerio (Zebrafish).